We begin with the raw amino-acid sequence, 329 residues long: Cathepsin K (329 aa).

A signal peptide spans 1 to 15 (MWGLTVLLLPVVSFA). A propeptide spans 16-114 (LYPEEILDTQ…TLYIPDWEGR (99 aa)) (activation peptide). A glycan (N-linked (GlcNAc...) asparagine) is linked at Asn-103. Intrachain disulfides connect Cys-136–Cys-177, Cys-170–Cys-210, and Cys-269–Cys-318. The active site involves Cys-139. Residues His-276 and Asn-296 contribute to the active site.

It belongs to the peptidase C1 family.

The protein localises to the lysosome. Its subcellular location is the secreted. It localises to the apical cell membrane. The enzyme catalyses Broad proteolytic activity. With small-molecule substrates and inhibitors, the major determinant of specificity is P2, which is preferably Leu, Met &gt; Phe, and not Arg.. Thiol protease involved in osteoclastic bone resorption and may participate partially in the disorder of bone remodeling. Displays potent endoprotease activity against fibrinogen at acid pH. May play an important role in extracellular matrix degradation. Involved in the release of thyroid hormone thyroxine (T4) by limited proteolysis of TG/thyroglobulin in the thyroid follicle lumen. The chain is Cathepsin K (CTSK) from Bos taurus (Bovine).